The following is a 658-amino-acid chain: Secretin XcpQ (658 aa).

A signal peptide spans 1 to 34 (MSQPLLRALFAPSSRSYVPAVLLSLALGIQAAHA). Residues 51-141 (AHWTINLKDA…TEAGGGQSAP (91 aa)) are N0. An N1 region spans residues 142–205 (DRLETRVIQV…DVIRQLDQKG (64 aa)). The N2 stretch occupies residues 206–279 (SHDYSVINLR…SLDTPTARSA (74 aa)). An N3 region spans residues 280 to 365 (NTRVIRLRHN…VPRAQVLVEA (86 aa)). The segment at 302-322 (SEGMKNNGGQGGEQTGGGRPS) is disordered. Residues 307–320 (NNGGQGGEQTGGGR) show a composition bias toward gly residues. The tract at residues 368–606 (VEISGDIQDA…VFLRPTVVRD (239 aa)) is secretin. The s domain stretch occupies residues 608–658 (AGLAALSGKKYSDIRVIDGTRGPEGRPSILPTNANQLFDGQAVDLRELMTE).

This sequence belongs to the bacterial secretin family. GSP D subfamily. In terms of assembly, forms a cylindrical channel with 15 subunits. The closed pentadecameric channel is 170 Angstroms long and 140 Angstroms in diameter.

The protein localises to the cell outer membrane. In terms of biological role, involved in a type II secretion system (T2SS, formerly general secretion pathway, GSP) for the export of proteins. This subunit forms the outer membrane channel. Among its substrates are PrpL, elastase LasB, chitin binding protein D (CbpD), aminopeptidase PaAP, and metalloprotease ImpA. The polypeptide is Secretin XcpQ (Pseudomonas aeruginosa (strain ATCC 15692 / DSM 22644 / CIP 104116 / JCM 14847 / LMG 12228 / 1C / PRS 101 / PAO1)).